A 307-amino-acid chain; its full sequence is Cysteine synthase (307 aa).

Residue Lys42 is modified to N6-(pyridoxal phosphate)lysine. Pyridoxal 5'-phosphate-binding positions include Asn72, 176–180 (GTGGH), and Ser263.

Belongs to the cysteine synthase/cystathionine beta-synthase family. Pyridoxal 5'-phosphate is required as a cofactor.

The enzyme catalyses O-acetyl-L-serine + hydrogen sulfide = L-cysteine + acetate. It participates in amino-acid biosynthesis; L-cysteine biosynthesis; L-cysteine from L-serine: step 2/2. This is Cysteine synthase (cysK) from Flavobacterium sp. (strain K3-15 / DSM ID92-509).